Reading from the N-terminus, the 501-residue chain is Probable cytosol aminopeptidase (501 aa).

Mn(2+) contacts are provided by lysine 267 and aspartate 272. The active site involves lysine 279. 3 residues coordinate Mn(2+): aspartate 290, aspartate 349, and glutamate 351. The active site involves arginine 353.

Belongs to the peptidase M17 family. The cofactor is Mn(2+).

It is found in the cytoplasm. It carries out the reaction Release of an N-terminal amino acid, Xaa-|-Yaa-, in which Xaa is preferably Leu, but may be other amino acids including Pro although not Arg or Lys, and Yaa may be Pro. Amino acid amides and methyl esters are also readily hydrolyzed, but rates on arylamides are exceedingly low.. It catalyses the reaction Release of an N-terminal amino acid, preferentially leucine, but not glutamic or aspartic acids.. Functionally, presumably involved in the processing and regular turnover of intracellular proteins. Catalyzes the removal of unsubstituted N-terminal amino acids from various peptides. This is Probable cytosol aminopeptidase from Desulfovibrio desulfuricans (strain ATCC 27774 / DSM 6949 / MB).